Consider the following 82-residue polypeptide: Delta-ctenitoxin-Pn2c (82 aa).

The N-terminal stretch at 1–17 (MKVAILFLSILVLAVAS) is a signal peptide. Positions 18-34 (ESIEESRDDFAVEELGR) are excised as a propeptide. 5 disulfide bridges follow: cysteine 37–cysteine 51, cysteine 44–cysteine 57, cysteine 48–cysteine 80, cysteine 50–cysteine 65, and cysteine 59–cysteine 63.

Expressed by the venom gland.

It localises to the secreted. In terms of biological role, reversible inhibitor of voltage-gated sodium channels (Nav). Delays the fast inactivation kinetics of neuronal-type sodium channels. In vivo, it induces rat penile erection. This effect may be due to the neuronal nitric oxide synthase (NOS1), since one of its selective inhibitor completely abolishes all the toxic effects of the toxin. This toxin also causes scratching, lacrimation, hypersalivation, sweating and agitation followed by spastic paralysis of the anterior and posterior extremities and death at dose levels of 0.24 mg/mouse. It is also insecticidal to the larval and adult forms of the house fly. The polypeptide is Delta-ctenitoxin-Pn2c (Phoneutria nigriventer (Brazilian armed spider)).